A 95-amino-acid polypeptide reads, in one-letter code: Large ribosomal subunit protein bL25 (95 aa).

A disordered region spans residues 1–20 (MSFKFNAEVRSKQGKGASRR).

It belongs to the bacterial ribosomal protein bL25 family. As to quaternary structure, part of the 50S ribosomal subunit; part of the 5S rRNA/L5/L18/L25 subcomplex. Contacts the 5S rRNA. Binds to the 5S rRNA independently of L5 and L18.

In terms of biological role, this is one of the proteins that binds to the 5S RNA in the ribosome where it forms part of the central protuberance. The protein is Large ribosomal subunit protein bL25 of Histophilus somni (strain 129Pt) (Haemophilus somnus).